A 198-amino-acid polypeptide reads, in one-letter code: Protein GrpE (198 aa).

This sequence belongs to the GrpE family. Homodimer.

The protein resides in the cytoplasm. In terms of biological role, participates actively in the response to hyperosmotic and heat shock by preventing the aggregation of stress-denatured proteins, in association with DnaK and GrpE. It is the nucleotide exchange factor for DnaK and may function as a thermosensor. Unfolded proteins bind initially to DnaJ; upon interaction with the DnaJ-bound protein, DnaK hydrolyzes its bound ATP, resulting in the formation of a stable complex. GrpE releases ADP from DnaK; ATP binding to DnaK triggers the release of the substrate protein, thus completing the reaction cycle. Several rounds of ATP-dependent interactions between DnaJ, DnaK and GrpE are required for fully efficient folding. The polypeptide is Protein GrpE (Vibrio harveyi (Beneckea harveyi)).